Consider the following 482-residue polypeptide: Putative fatty acid desaturase 2-like protein FADS2B (482 aa).

The tract at residues 1-31 (MKFEEKCGDNGSIVGRNQSYPGEKHQPKGKP) is disordered. The Cytoplasmic segment spans residues 1–167 (MKFEEKCGDN…EAMNMFHANL (167 aa)). The 77-residue stretch at 56-132 (LSMYTWLEIQ…LKPLLIGELA (77 aa)) folds into the Cytochrome b5 heme-binding domain. Positions 90 and 113 each coordinate heme. A helical transmembrane segment spans residues 168–188 (GFFFLHFVQILILEVLAWLIV). Over 189–190 (YH) the chain is Lumenal. Residues 191–211 (FGSGWPVTMFISFLLTISQAS) form a helical membrane-spanning segment. At 212–305 (SSFLQHDAGH…YEEQHLYFYK (94 aa)) the chain is on the cytoplasmic side. The Histidine box-1 motif lies at 217-221 (HDAGH). A Histidine box-2 motif is present at residues 254–258 (HFEQH). Residues 306-326 (VWLPLFMPVYLKLPSMQAMYL) form a helical membrane-spanning segment. Topologically, residues 327-343 (QRYWVCFSLQDITWVSS) are lumenal. Residues 344–364 (FYIYFITFGLYYGIFGTMLLI) form a helical membrane-spanning segment. The Cytoplasmic portion of the chain corresponds to 365–482 (YLVKFLESPW…AALWADAYYE (118 aa)). The Histidine box-3 motif lies at 421 to 425 (QIEHH).

This sequence belongs to the fatty acid desaturase type 1 family.

It localises to the endoplasmic reticulum membrane. It functions in the pathway lipid metabolism; polyunsaturated fatty acid biosynthesis. The chain is Putative fatty acid desaturase 2-like protein FADS2B from Homo sapiens (Human).